The following is a 467-amino-acid chain: MSSLTDSQVNDLHCSIYRYVQWVSQNNGSSDLLNKLQSVLDIDELQLSLDDGDQMLLPKKWGSIIRLQRAITKLEQKCDALQQELDDKTKQLETIVPKDTQIATTTDVNWLPPDHIYASIQNESPVTAIKLHPSLAIVYVGTDTGRLIAYDILNYTIPLAVTTAHSKAITSIEVIEAHNFEEFIDSTTLVSTTSKDAQINVYDHSSNTGELKLIRSFNAHDSTVSSQKTWQKDNDVLLASSSRDATVKVWRVNDSRCLQSFSPHSEWVKSIDVLDEYILSGSLDSTLRLTHWPSGNGLSVGTGHEFPIERVLIIPFSDSKICTSPYRDQNEHSAFAPLRFKYCASAARDNTIKIWEVPLPQLKPNSAPVPSTTNTTFKCVMTLRGHTSWVKDLKLRGDHLFSCSDDETIKCWDLNTGNCVKTWSSIHNNFINCIDIDREATIEQFSPSLQREILVSGDMDNKVKIIR.

The stretch at 62-96 (GSIIRLQRAITKLEQKCDALQQELDDKTKQLETIV) forms a coiled coil. WD repeat units follow at residues 121–160 (QNES…IPLA), 164–212 (AHSK…GELK), 219–262 (AHDS…QSFS), 264–302 (HSEW…SVGT), 325–365 (PYRD…LKPN), 385–424 (GHTS…KTWS), and 426–466 (IHNN…VKII).

This sequence belongs to the WD repeat LIS1/nudF family. As to quaternary structure, self-associates. Interacts with NDL1 and dynein.

The protein localises to the cytoplasm. Its subcellular location is the cytoskeleton. It localises to the spindle pole. Its function is as follows. Positively regulates the activity of the minus-end directed microtubule motor protein dynein. Plays a central role in positioning the mitotic spindle at the bud neck during cell division. Targets cytoplasmic dynein to microtubule plus ends, thereby promoting dynein-mediated microtubule sliding along the bud cortex and consequently the movement of the mitotic spindle to the bud neck. The chain is Nuclear distribution protein PAC1 from Candida glabrata (strain ATCC 2001 / BCRC 20586 / JCM 3761 / NBRC 0622 / NRRL Y-65 / CBS 138) (Yeast).